Consider the following 372-residue polypeptide: MAFEDRCSPSQANSPGPVTGRVPAPHAETLAYSPQSQYTCTTIESKYERGSPNMTIVKVQPDSPPPSPGRGQNEMEYQDYYRPETPDVKPHFSREEQRFELDRSRGQRLQPTTPVAFSINNILHPEFGLNAIRKTSKIEGPKPIGPNHSILYKPYDLSKPDLSKYGFDYLKSKETSDCNALPPLGGLRETVSQIGERLSRDREPPKSLEQQKRPDSASSIVSSTSSGAVSTCGSSDASSIQSQSNPGQLWPAWVYCTRYSDRPSSGPRSRRVKKKAAPEEKRPRTAFSGAQLARLKHEFAENRYLTERRRQSLAAELGLAEAQIKIWFQNKRAKIKKASGQRNPLALQLMAQGLYNHSTVTESDDEEEINVT.

Disordered regions lie at residues Met-1–Gln-35, Tyr-47–Thr-112, Glu-196–Pro-246, and Asp-261–Ala-286. Composition is skewed to basic and acidic residues over residues Asp-79–Arg-105 and Arg-197–Asp-215. A compositionally biased stretch (low complexity) spans Ser-216–Ser-244. A DNA-binding region (homeobox) is located at residues Glu-280–Ser-339.

This sequence belongs to the engrailed homeobox family. In terms of tissue distribution, expressed in the middle silk gland but not in the posterior silk gland during the fourth molt/fifth intermolt period.

It is found in the nucleus. Functionally, this protein might be involved in the compartmentalization of the silk gland. This Bombyx mori (Silk moth) protein is Segmentation polarity homeobox protein engrailed (en).